The primary structure comprises 550 residues: Glucose-6-phosphate isomerase (550 aa).

Glu357 (proton donor) is an active-site residue. Catalysis depends on residues His389 and Lys509.

The protein belongs to the GPI family.

The protein resides in the cytoplasm. The enzyme catalyses alpha-D-glucose 6-phosphate = beta-D-fructose 6-phosphate. It functions in the pathway carbohydrate biosynthesis; gluconeogenesis. The protein operates within carbohydrate degradation; glycolysis; D-glyceraldehyde 3-phosphate and glycerone phosphate from D-glucose: step 2/4. Functionally, catalyzes the reversible isomerization of glucose-6-phosphate to fructose-6-phosphate. In Anaeromyxobacter dehalogenans (strain 2CP-C), this protein is Glucose-6-phosphate isomerase.